Here is a 303-residue protein sequence, read N- to C-terminus: Caspase-7 (303 aa).

The segment covering 1–21 has biased composition (acidic residues); that stretch reads MADDQGCIEEQGVEDSANEDS. The segment at 1–30 is disordered; that stretch reads MADDQGCIEEQGVEDSANEDSVDAKPDRSS. A2 is subject to N-acetylalanine. The propeptide at 2–23 is N-terminally processed; it reads ADDQGCIEEQGVEDSANEDSVD. Position 30 is a phosphoserine; by PAK2 (S30). A Phosphoserine modification is found at S37. Residues 38–41 form an exosite region; it reads KKKK. The segment at 76-87 is loop L1; sequence KNFDKVTGMGVR. Residue H144 is part of the active site. T173 is subject to Phosphothreonine; by PAK2. Residue C186 is part of the active site. The segment at 187-196 is loop L2; sequence RGTELDDGIQ. Positions 199–206 are excised as a propeptide; sequence SGPINDTD. The loop L3 stretch occupies residues 226 to 238; the sequence is VPGYYSWRSPGRG. (Microbial infection) ADP-riboxanated arginine is present on R233. Residue S239 is modified to Phosphoserine; by PAK2. Positions 274 to 288 are loop L4; it reads ESQSDDPHFHEKKQI.

The protein belongs to the peptidase C14A family. As to quaternary structure, heterotetramer that consists of two anti-parallel arranged heterodimers, each one formed by a 20 kDa (p20) and a 11 kDa (p11) subunit. Interacts with XIAP (via its second BIR domain); inhibiting CASP7 activity. Interacts with BIRC6/bruce. Interacts with ATXN3 (short isoform 1). Interacts with HSPA5. In terms of processing, cleavage by different proteases, such as granzyme B (GZMB), caspase-1 (CASP1), caspase-8 (CASP8), caspase-9 (CASP9) or caspase-10 (CASP10) generate the two active subunits. Its involvement in different programmed cell death processes is probably specified by the protease that activates CASP7. Cleaved and activated by initiator caspases (CASP8, CASP9 and/or CASP10), leading to execution phase of apoptosis. Cleavage and maturation by GZMB regulates granzyme-mediated programmed cell death. Cleaved and activated by CASP1 in response to bacterial infection. Propeptide domains can also be cleaved efficiently by CASP3. Active heterodimers between the small subunit of caspase-7 and the large subunit of CASP3, and vice versa, also occur. Also cleaved at the N-terminus at alternative sites by CAPN1, leading to its activation. Post-translationally, phosphorylation at Ser-30 and Ser-239 by PAK2 inhibits its activity. Phosphorylation at Ser-30 prevents cleavage and activation by initiator caspase CASP9, while phosphorylation at Ser-239 prevents thiol protease activity by preventing substrate-binding. (Microbial infection) ADP-riboxanation by C.violaceum CopC blocks CASP7 processing, preventing CASP7 activation and ability to recognize and cleave substrates. In terms of processing, ubiquitinated by BIRC6; this activity is inhibited by DIABLO/SMAC. Highly expressed in lung, skeletal muscle, liver, kidney, spleen and heart, and moderately in testis. No expression in the brain.

The protein resides in the cytoplasm. It localises to the cytosol. Its subcellular location is the nucleus. The protein localises to the secreted. It is found in the extracellular space. It catalyses the reaction Strict requirement for an Asp residue at position P1 and has a preferred cleavage sequence of Asp-Glu-Val-Asp-|-.. With respect to regulation, during activation, the N-terminal disordered prodomain is removed by cleavage. Concomitantly, double cleavage gives rise to a large Caspase-7 subunit p20 and a small Caspase-7 subunit p11. The two large and two small subunits then assemble to form the active CASP7 complex. Can be cleaved and activated by different caspases, depending on the context. Cleaved and activated by initiator caspases (CASP8, CASP9 and/or CASP10), leading to execution phase of apoptosis. Inhibited by XIAP, which directly binds to the active site pocket and obstructs substrate entry. Cleavage and maturation by GZMB regulates granzyme-mediated programmed cell death. Cleavage and maturation by CASP1 regulates pyroptosis. Phosphorylation at Ser-30 and Ser-239 by PAK2 inhibits its activity. Inhibited by isatin sulfonamides. Inhibited by 2-(2,4-Dichlorophenoxy)- N-(2-mercapto-ethyl)-acetamide (DICA) and 5-Fluoro-1H-indole-2- carboxylic acid (2-mercapto-ethyl)-amide (FICA) allosteric inhibitors, which disrupt an interaction between Arg-187 and Tyr-223. Specifically inhibited by DARPin D7.18 and D7.43, which specifically bind to the precursor CASP7 and prevent its processing and activation. Inhibited by BIRC6; following inhibition of BIRC6-caspase binding by DIABLO/SMAC, BIRC6 is subjected to caspase cleavage, leading to an increase in active caspases. Functionally, thiol protease involved in different programmed cell death processes, such as apoptosis, pyroptosis or granzyme-mediated programmed cell death, by proteolytically cleaving target proteins. Has a marked preference for Asp-Glu-Val-Asp (DEVD) consensus sequences, with some plasticity for alternate non-canonical sequences. Its involvement in the different programmed cell death processes is probably determined by upstream proteases that activate CASP7. Acts as an effector caspase involved in the execution phase of apoptosis: following cleavage and activation by initiator caspases (CASP8, CASP9 and/or CASP10), mediates execution of apoptosis by catalyzing cleavage of proteins, such as CLSPN, PARP1, PTGES3 and YY1. Compared to CASP3, acts as a minor executioner caspase and cleaves a limited set of target proteins. Acts as a key regulator of the inflammatory response in response to bacterial infection by catalyzing cleavage and activation of the sphingomyelin phosphodiesterase SMPD1 in the extracellular milieu, thereby promoting membrane repair. Regulates pyroptosis in intestinal epithelial cells: cleaved and activated by CASP1 in response to S.typhimurium infection, promoting its secretion to the extracellular milieu, where it catalyzes activation of SMPD1, generating ceramides that repair membranes and counteract the action of gasdermin-D (GSDMD) pores. Regulates granzyme-mediated programmed cell death in hepatocytes: cleaved and activated by granzyme B (GZMB) in response to bacterial infection, promoting its secretion to the extracellular milieu, where it catalyzes activation of SMPD1, generating ceramides that repair membranes and counteract the action of perforin (PRF1) pores. Following cleavage by CASP1 in response to inflammasome activation, catalyzes processing and inactivation of PARP1, alleviating the transcription repressor activity of PARP1. Acts as an inhibitor of type I interferon production during virus-induced apoptosis by mediating cleavage of antiviral proteins CGAS, IRF3 and MAVS, thereby preventing cytokine overproduction. Cleaves and activates sterol regulatory element binding proteins (SREBPs). Cleaves phospholipid scramblase proteins XKR4, XKR8 and XKR9. In case of infection, catalyzes cleavage of Kaposi sarcoma-associated herpesvirus protein ORF57, thereby preventing expression of viral lytic genes. Cleaves BIRC6 following inhibition of BIRC6-caspase binding by DIABLO/SMAC. Its function is as follows. Lacks enzymatic activity. This is Caspase-7 from Homo sapiens (Human).